The primary structure comprises 89 residues: Small ribosomal subunit protein uS15 (89 aa).

The protein belongs to the universal ribosomal protein uS15 family. As to quaternary structure, part of the 30S ribosomal subunit. Forms a bridge to the 50S subunit in the 70S ribosome, contacting the 23S rRNA.

In terms of biological role, one of the primary rRNA binding proteins, it binds directly to 16S rRNA where it helps nucleate assembly of the platform of the 30S subunit by binding and bridging several RNA helices of the 16S rRNA. Functionally, forms an intersubunit bridge (bridge B4) with the 23S rRNA of the 50S subunit in the ribosome. The sequence is that of Small ribosomal subunit protein uS15 from Solibacter usitatus (strain Ellin6076).